Here is a 534-residue protein sequence, read N- to C-terminus: CTP synthase (534 aa).

Positions Met1–Leu269 are amidoligase domain. Residue Ser17 participates in CTP binding. Ser17 provides a ligand contact to UTP. Ser18 to Val23 contributes to the ATP binding site. Tyr58 contributes to the L-glutamine binding site. Asp75 is an ATP binding site. The Mg(2+) site is built by Asp75 and Glu143. CTP contacts are provided by residues Asp150–Glu152, Lys190–Gln195, and Lys226. Residues Lys190 to Gln195 and Lys226 contribute to the UTP site. Positions Asp294–Glu532 constitute a Glutamine amidotransferase type-1 domain. Gly352 is an L-glutamine binding site. The active-site Nucleophile; for glutamine hydrolysis is Cys379. L-glutamine is bound by residues Leu380–Gln383, Glu403, and Arg460. Active-site residues include His505 and Glu507.

Belongs to the CTP synthase family. As to quaternary structure, homotetramer.

The catalysed reaction is UTP + L-glutamine + ATP + H2O = CTP + L-glutamate + ADP + phosphate + 2 H(+). The enzyme catalyses L-glutamine + H2O = L-glutamate + NH4(+). It carries out the reaction UTP + NH4(+) + ATP = CTP + ADP + phosphate + 2 H(+). The protein operates within pyrimidine metabolism; CTP biosynthesis via de novo pathway; CTP from UDP: step 2/2. Allosterically activated by GTP, when glutamine is the substrate; GTP has no effect on the reaction when ammonia is the substrate. The allosteric effector GTP functions by stabilizing the protein conformation that binds the tetrahedral intermediate(s) formed during glutamine hydrolysis. Inhibited by the product CTP, via allosteric rather than competitive inhibition. Catalyzes the ATP-dependent amination of UTP to CTP with either L-glutamine or ammonia as the source of nitrogen. Regulates intracellular CTP levels through interactions with the four ribonucleotide triphosphates. The chain is CTP synthase from Hydrogenobaculum sp. (strain Y04AAS1).